Consider the following 426-residue polypeptide: Enolase (426 aa).

A (2R)-2-phosphoglycerate-binding site is contributed by Gln163. Glu205 serves as the catalytic Proton donor. Positions 242, 283, and 310 each coordinate Mg(2+). The (2R)-2-phosphoglycerate site is built by Lys335, Arg364, Ser365, and Lys386. Catalysis depends on Lys335, which acts as the Proton acceptor.

Belongs to the enolase family. It depends on Mg(2+) as a cofactor.

It localises to the cytoplasm. The protein localises to the secreted. Its subcellular location is the cell surface. It catalyses the reaction (2R)-2-phosphoglycerate = phosphoenolpyruvate + H2O. Its pathway is carbohydrate degradation; glycolysis; pyruvate from D-glyceraldehyde 3-phosphate: step 4/5. Functionally, catalyzes the reversible conversion of 2-phosphoglycerate (2-PG) into phosphoenolpyruvate (PEP). It is essential for the degradation of carbohydrates via glycolysis. The polypeptide is Enolase (Paenarthrobacter aurescens (strain TC1)).